The primary structure comprises 546 residues: MKNQDKKNGAAKQSNPKSSPGQPEAGPEGAQERPSQAAPAVEAEGPGSSQAPRKPEGAQARTAQSGALRDVSEELSRQLEDILSTYCVDNNQGGPGEDGAQGEPAEPEDAEKSRTYVARNGEPEPTPVVNGEKEPSKGDPNTEEIRQSDEVGDRDHRRPQEKKKAKGLGKEITLLMQTLNTLSTPEEKLAALCKKYAELLEEHRNSQKQMKLLQKKQSQLVQEKDHLRGEHSKAVLARSKLESLCRELQRHNRSLKEEGVQRAREEEEKRKEVTSHFQVTLNDIQLQMEQHNERNSKLRQENMELAERLKKLIEQYELREEHIDKVFKHKDLQQQLVDAKLQQAQEMLKEAEERHQREKDFLLKEAVESQRMCELMKQQETHLKQQLALYTEKFEEFQNTLSKSSEVFTTFKQEMEKMTKKIKKLEKETTMYRSRWESSNKALLEMAEEKTVRDKELEGLQVKIQRLEKLCRALQTERNDLNKRVQDLSAGGQGSLTDSGPERRPEGPGAQAPSSPRVTEAPCYPGAPSTEASGQTGPQEPTSARA.

2 disordered regions span residues 1 to 170 and 482 to 546; these read MKNQ…GLGK and NKRV…SARA. Residues 11-21 are compositionally biased toward polar residues; sequence AKQSNPKSSPG. Composition is skewed to basic and acidic residues over residues 70–80 and 143–158; these read DVSEELSRQLE and EEIR…DHRR. Ser72 carries the phosphoserine modification. Residues 186–491 adopt a coiled-coil conformation; the sequence is EEKLAALCKK…NKRVQDLSAG (306 aa). Ser515 bears the Phosphoserine mark. Over residues 530–546 the composition is skewed to polar residues; sequence TEASGQTGPQEPTSARA.

It belongs to the taxilin family. Binds to the C-terminal coiled coil region of syntaxin family members STX1A, STX3A and STX4A, but not when these proteins are complexed with SNAP25, VAMP2 or STXBP1, suggesting that it interacts with syntaxins that do not form the SNARE complex. As to expression, ubiquitous, with much higher expression in heart, kidney, liver and pancreas.

Its function is as follows. May be involved in intracellular vesicle traffic and potentially in calcium-dependent exocytosis in neuroendocrine cells. The polypeptide is Alpha-taxilin (TXLNA) (Homo sapiens (Human)).